The chain runs to 237 residues: Methylthioribulose-1-phosphate dehydratase (237 aa).

Position 97 (Cys97) interacts with substrate. Zn(2+) contacts are provided by His114 and His116. The Proton donor/acceptor role is filled by Glu143. His199 contributes to the Zn(2+) binding site.

Belongs to the aldolase class II family. MtnB subfamily. The cofactor is Zn(2+).

It localises to the cytoplasm. It carries out the reaction 5-(methylsulfanyl)-D-ribulose 1-phosphate = 5-methylsulfanyl-2,3-dioxopentyl phosphate + H2O. Its pathway is amino-acid biosynthesis; L-methionine biosynthesis via salvage pathway; L-methionine from S-methyl-5-thio-alpha-D-ribose 1-phosphate: step 2/6. Functionally, catalyzes the dehydration of methylthioribulose-1-phosphate (MTRu-1-P) into 2,3-diketo-5-methylthiopentyl-1-phosphate (DK-MTP-1-P). The sequence is that of Methylthioribulose-1-phosphate dehydratase from Coccidioides posadasii (strain C735) (Valley fever fungus).